Reading from the N-terminus, the 276-residue chain is tRNA dimethylallyltransferase (276 aa).

The interval 9–12 (DSLS) is interaction with substrate tRNA.

It belongs to the IPP transferase family. Monomer. Requires Mg(2+) as cofactor.

The catalysed reaction is adenosine(37) in tRNA + dimethylallyl diphosphate = N(6)-dimethylallyladenosine(37) in tRNA + diphosphate. In terms of biological role, catalyzes the transfer of a dimethylallyl group onto the adenine at position 37 in tRNAs that read codons beginning with uridine, leading to the formation of N6-(dimethylallyl)adenosine (i(6)A). In Helicobacter pylori (strain G27), this protein is tRNA dimethylallyltransferase (miaA).